A 1265-amino-acid polypeptide reads, in one-letter code: DNA-directed RNA polymerase subunit beta'' (1265 aa).

Cys223, Cys297, Cys304, and Cys307 together coordinate Zn(2+).

It belongs to the RNA polymerase beta' chain family. RpoC2 subfamily. As to quaternary structure, in plastids the minimal PEP RNA polymerase catalytic core is composed of four subunits: alpha, beta, beta', and beta''. When a (nuclear-encoded) sigma factor is associated with the core the holoenzyme is formed, which can initiate transcription. Requires Zn(2+) as cofactor.

The protein resides in the plastid. Its subcellular location is the cyanelle. The catalysed reaction is RNA(n) + a ribonucleoside 5'-triphosphate = RNA(n+1) + diphosphate. Functionally, DNA-dependent RNA polymerase catalyzes the transcription of DNA into RNA using the four ribonucleoside triphosphates as substrates. This is DNA-directed RNA polymerase subunit beta'' from Cyanophora paradoxa.